We begin with the raw amino-acid sequence, 156 residues long: Transcription factor MafK (156 aa).

The segment at 1–21 (MTTNPKPNKALKVKEESGENA) is disordered. The basic motif stretch occupies residues 51 to 76 (RLKQRRRTLKNRGYAASCRIKRVTQK). The 64-residue stretch at 51–114 (RLKQRRRTLK…DALRSKYEAL (64 aa)) folds into the bZIP domain. The leucine-zipper stretch occupies residues 79 to 93 (LERQRVELQQEVEKL).

This sequence belongs to the bZIP family. Maf subfamily. Homodimer or heterodimer.

It localises to the nucleus. Its function is as follows. Since they lack a putative transactivation domain, the small Mafs behave as transcriptional repressors when they dimerize among themselves. However, they act as transcriptional activators by dimerizing with other (usually larger) basic-zipper proteins and recruiting them to specific DNA-binding sites. Small Maf proteins heterodimerize with Fos and may act as competitive repressors of the NF-E2 transcription factor. This chain is Transcription factor MafK (MAFK), found in Gallus gallus (Chicken).